The chain runs to 504 residues: Cobyric acid synthase (504 aa).

A GATase cobBQ-type domain is found at 258 to 454; sequence EIEIAIIKLP…LHGIFENDEW (197 aa). Cys339 serves as the catalytic Nucleophile. The active site involves His446.

Belongs to the CobB/CobQ family. CobQ subfamily.

It participates in cofactor biosynthesis; adenosylcobalamin biosynthesis. In terms of biological role, catalyzes amidations at positions B, D, E, and G on adenosylcobyrinic A,C-diamide. NH(2) groups are provided by glutamine, and one molecule of ATP is hydrogenolyzed for each amidation. The chain is Cobyric acid synthase from Prochlorococcus marinus (strain NATL2A).